Reading from the N-terminus, the 390-residue chain is 8-amino-7-oxononanoate synthase (390 aa).

A substrate-binding site is contributed by Arg-20. 107 to 108 contacts pyridoxal 5'-phosphate; the sequence is GF. His-132 provides a ligand contact to substrate. Pyridoxal 5'-phosphate-binding positions include Ser-179, 204–207, and 235–238; these read DDAH and TLSK. Lys-238 carries the N6-(pyridoxal phosphate)lysine modification. Substrate is bound at residue Thr-352.

The protein belongs to the class-II pyridoxal-phosphate-dependent aminotransferase family. BioF subfamily. Homodimer. Pyridoxal 5'-phosphate is required as a cofactor.

It carries out the reaction 6-carboxyhexanoyl-[ACP] + L-alanine + H(+) = (8S)-8-amino-7-oxononanoate + holo-[ACP] + CO2. It functions in the pathway cofactor biosynthesis; biotin biosynthesis. Its function is as follows. Catalyzes the decarboxylative condensation of pimeloyl-[acyl-carrier protein] and L-alanine to produce 8-amino-7-oxononanoate (AON), [acyl-carrier protein], and carbon dioxide. The protein is 8-amino-7-oxononanoate synthase of Exiguobacterium sibiricum (strain DSM 17290 / CCUG 55495 / CIP 109462 / JCM 13490 / 255-15).